The chain runs to 151 residues: Sec-independent protein translocase protein TatB (151 aa).

The chain crosses the membrane as a helical span at residues 1-21; the sequence is MFDIGFLELLICGVIALLVLG. Basic and acidic residues-rich tracts occupy residues 87-99 and 122-132; these read KYEHMILPDDQTR and EPPHEPVRDEA. The disordered stretch occupies residues 87–151; the sequence is KYEHMILPDD…SPTSPSDKYS (65 aa). The segment covering 134–151 has biased composition (low complexity); the sequence is ASDQPSDSSPTSPSDKYS.

Belongs to the TatB family. In terms of assembly, the Tat system comprises two distinct complexes: a TatABC complex, containing multiple copies of TatA, TatB and TatC subunits, and a separate TatA complex, containing only TatA subunits. Substrates initially bind to the TatABC complex, which probably triggers association of the separate TatA complex to form the active translocon.

The protein resides in the cell inner membrane. In terms of biological role, part of the twin-arginine translocation (Tat) system that transports large folded proteins containing a characteristic twin-arginine motif in their signal peptide across membranes. Together with TatC, TatB is part of a receptor directly interacting with Tat signal peptides. TatB may form an oligomeric binding site that transiently accommodates folded Tat precursor proteins before their translocation. This Marinobacter nauticus (strain ATCC 700491 / DSM 11845 / VT8) (Marinobacter aquaeolei) protein is Sec-independent protein translocase protein TatB.